The chain runs to 362 residues: Metacaspase-3 (362 aa).

Catalysis depends on residues His174 and Cys230.

This sequence belongs to the peptidase C14B family.

This chain is Metacaspase-3 (AMC3), found in Arabidopsis thaliana (Mouse-ear cress).